The primary structure comprises 753 residues: Catalase-peroxidase (753 aa).

Positions 1–39 (MLPRVNKRSNCIAKKTSNRLISAVSLAIASLCISQSALA) are cleaved as a signal peptide. Residues 118 to 241 (WHSTGTYRMS…LAAVQMGLIY (124 aa)) constitute a cross-link (tryptophyl-tyrosyl-methioninium (Trp-Tyr) (with M-267)). Histidine 119 acts as the Proton acceptor in catalysis. The tryptophyl-tyrosyl-methioninium (Tyr-Met) (with W-118) cross-link spans 241 to 267 (YVNPEGPNGNHDPISAAADIRDVFARM). Residue histidine 282 coordinates heme b.

Belongs to the peroxidase family. Peroxidase/catalase subfamily. As to quaternary structure, homodimer or homotetramer. The cofactor is heme b. Formation of the three residue Trp-Tyr-Met cross-link is important for the catalase, but not the peroxidase activity of the enzyme.

The catalysed reaction is H2O2 + AH2 = A + 2 H2O. It catalyses the reaction 2 H2O2 = O2 + 2 H2O. Bifunctional enzyme with both catalase and broad-spectrum peroxidase activity. In Pseudoalteromonas atlantica (strain T6c / ATCC BAA-1087), this protein is Catalase-peroxidase.